Consider the following 366-residue polypeptide: Galactoside alpha-(1,2)-fucosyltransferase 1 (366 aa).

Residues 1-8 lie on the Cytoplasmic side of the membrane; the sequence is MWPRSHRH. The helical; Signal-anchor for type II membrane protein transmembrane segment at 9-25 threads the bilayer; sequence LCLAFLLVCVLSAISFL. At 26 to 366 the chain is on the lumenal side; the sequence is IHFHQDSIRH…LSPLWPLAEP (341 aa). Residues Asn66, Asn302, and Asn328 are each glycosylated (N-linked (GlcNAc...) asparagine).

Belongs to the glycosyltransferase 11 family.

It localises to the golgi apparatus. The protein localises to the golgi stack membrane. The enzyme catalyses a beta-D-galactosyl-(1-&gt;4)-N-acetyl-beta-D-glucosaminyl derivative + GDP-beta-L-fucose = an alpha-L-Fuc-(1-&gt;2)-beta-D-Gal-(1-&gt;4)-beta-D-GlcNAc derivative + GDP + H(+). It catalyses the reaction a ganglioside GA1 + GDP-beta-L-fucose = a ganglioside Fuc-GA1 + GDP + H(+). The catalysed reaction is a beta-D-Gal-(1-&gt;3)-beta-D-GlcNAc-(1-&gt;3)-beta-D-Gal-(1-&gt;4)-beta-D-Glc-(1&lt;-&gt;1')-Cer(d18:1(4E)) + GDP-beta-L-fucose = alpha-L-fucosyl-(1-&gt;2)- beta-D-galactosyl-(1-&gt;3)-N-acetyl-beta-D-glucosaminyl-(1-&gt;3)-beta-D-galactosyl-(1-&gt;4)-beta-D-glucosyl-(1&lt;-&gt;1')-N-acylsphing-4-enine + GDP + H(+). It carries out the reaction a neolactoside nLc4Cer(d18:1(4E)) + GDP-beta-L-fucose = a neolactoside IV(2)-alpha-Fuc-nLc4Cer(d18:1(4E)) + GDP + H(+). The enzyme catalyses a ganglioside GM1 + GDP-beta-L-fucose = a ganglioside Fuc-GM1 + GDP + H(+). It catalyses the reaction beta-D-galactosyl-(1-&gt;3)-N-acetyl-D-galactosamine + GDP-beta-L-fucose = alpha-L-fucosyl-(1-&gt;2)-beta-D-galactosyl-(1-&gt;3)-N-acetyl-D-galactosamine + GDP + H(+). Its pathway is protein modification; protein glycosylation. Functionally, catalyzes the transfer of L-fucose, from a guanosine diphosphate-beta-L-fucose, to the terminal galactose residue of glycoconjugates through an alpha(1,2) linkage leading to H antigen synthesis that is an intermediate substrate in the synthesis of ABO blood group antigens. H antigen is essential for maturation of the glomerular layer of the main olfactory bulb, in cell migration and early cell-cell contacts during tumor associated angiogenesis. Preferentially fucosylates soluble lactose and to a lesser extent fucosylates glycolipids gangliosides GA1 and GM1a. In Saimiri boliviensis boliviensis (Bolivian squirrel monkey), this protein is Galactoside alpha-(1,2)-fucosyltransferase 1.